The primary structure comprises 61 residues: [Thr6]-bradykinyl-Val,Asp (61 aa).

The N-terminal stretch at 1–22 (MSFLKKSLFLVLFLGFVSFSIC) is a signal peptide. Positions 23–50 (EEEKREDEEEENEREENKESEEKRNQEE) are excised as a propeptide. The disordered stretch occupies residues 24–61 (EEKREDEEEENEREENKESEEKRNQEERPPGFTPFRVD). Over residues 26–36 (KREDEEEENER) the composition is skewed to acidic residues. Positions 37-52 (EENKESEEKRNQEERP) are enriched in basic and acidic residues. Residue Pro-53 is modified to 4-hydroxyproline; in form [Hyp3,Thr6]-bradykinyl-Val,Asp and [Hyp3,Thr6]-bradykinin.

It belongs to the frog skin active peptide (FSAP) family. Bradykinin-related peptide subfamily. As to expression, expressed by the skin glands.

It localises to the secreted. Induces relaxation of rat smooth muscle from tail artery (EC(50)=16.8 nM) and contraction of that from ileum (EC(50)=205 nM), urinary bladder (EC(50)=895 nM) and uterus (EC(50)=60.3 nM). Binds to both bradykinin receptor B1 (BDKRB1) and B2 (BDKRB2). Its function is as follows. [Hyp3,Thr6]-bradykinin: Induces relaxation of rat smooth muscle from tail artery (EC(50)=56.7 nM) and contraction of that from ileum (EC(50)=588 nM), urinary bladder (EC(50)=4.6 uM) and uterus (EC(50)=3.9 nM). Binds to both bradykinin receptor B1 (BDKRB1) and B2 (BDKRB2). In arterial smooth muscle, the effect via BDKRB1 is stronger, in uterus, ileum and urinary bladder the effect via BDKRB2. In terms of biological role, induces relaxation of rat smooth muscle from tail artery (EC(50)=10.8 nM) and contraction of that from ileum (EC(50)=645 nM), urinary bladder (EC(50)=1.1 uM) and uterus (EC(50)=1.2 uM). Binds to both bradykinin receptor B1 (BDKRB1) and B2 (BDKRB2). Apart from uterus smooth muscle, the effect via BDKRB2 is stronger. Functionally, [Hyp3,Thr6]-bradykinyl-Val,Asp: Induces relaxation of rat smooth muscle from tail artery (EC(50)=3.5 nM) and contraction of that from ileum (EC(50)=223 nM), urinary bladder (EC(50)=1.5 uM) and uterus (EC(50)=356 nM). Binds to both bradykinin receptor B1 (BDKRB1) and B2 (BDKRB2); the effects via BDKRB2 are stronger. The chain is [Thr6]-bradykinyl-Val,Asp from Agalychnis dacnicolor (Giant Mexican leaf frog).